The following is a 586-amino-acid chain: Dihydroxy-acid dehydratase 2 (586 aa).

Position 68 (Cys68) interacts with [2Fe-2S] cluster. Mg(2+) is bound at residue Asp100. Cys141 is a binding site for [2Fe-2S] cluster. Mg(2+) contacts are provided by Asp142 and Lys143. Residue Lys143 is modified to N6-carboxylysine. Cys213 is a [2Fe-2S] cluster binding site. Residue Glu463 participates in Mg(2+) binding. The Proton acceptor role is filled by Ser489.

It belongs to the IlvD/Edd family. As to quaternary structure, homodimer. The cofactor is [2Fe-2S] cluster. Mg(2+) is required as a cofactor.

It catalyses the reaction (2R)-2,3-dihydroxy-3-methylbutanoate = 3-methyl-2-oxobutanoate + H2O. It carries out the reaction (2R,3R)-2,3-dihydroxy-3-methylpentanoate = (S)-3-methyl-2-oxopentanoate + H2O. Its pathway is amino-acid biosynthesis; L-isoleucine biosynthesis; L-isoleucine from 2-oxobutanoate: step 3/4. It functions in the pathway amino-acid biosynthesis; L-valine biosynthesis; L-valine from pyruvate: step 3/4. Functions in the biosynthesis of branched-chain amino acids. Catalyzes the dehydration of (2R,3R)-2,3-dihydroxy-3-methylpentanoate (2,3-dihydroxy-3-methylvalerate) into 2-oxo-3-methylpentanoate (2-oxo-3-methylvalerate) and of (2R)-2,3-dihydroxy-3-methylbutanoate (2,3-dihydroxyisovalerate) into 2-oxo-3-methylbutanoate (2-oxoisovalerate), the penultimate precursor to L-isoleucine and L-valine, respectively. This chain is Dihydroxy-acid dehydratase 2, found in Mesorhizobium japonicum (strain LMG 29417 / CECT 9101 / MAFF 303099) (Mesorhizobium loti (strain MAFF 303099)).